The primary structure comprises 114 residues: DNA-directed RNA polymerases II, IV and V subunit 9A (114 aa).

Residues C7, C10, C29, C32, C76, C79, C103, and C108 each coordinate Zn(2+). The TFIIS-type zinc finger occupies K72–R113.

The protein belongs to the archaeal RpoM/eukaryotic RPA12/RPB9/RPC11 RNA polymerase family. As to quaternary structure, component of the RNA polymerase II, IV and V complexes. Interacts with NRPD1.

The protein resides in the nucleus. It localises to the nucleolus. Functionally, DNA-dependent RNA polymerase catalyzes the transcription of DNA into RNA using the four ribonucleoside triphosphates as substrates. Component of RNA polymerase II which synthesizes mRNA precursors and many functional non-coding RNAs. Pol II is the central component of the basal RNA polymerase II transcription machinery. It is composed of mobile elements that move relative to each other. Component of RNA polymerases IV and V which mediate short-interfering RNAs (siRNA) accumulation and subsequent RNA-directed DNA methylation-dependent (RdDM) transcriptional gene silencing (TGS) of endogenous repeated sequences, including transposable elements. Required for RNA silencing. In Arabidopsis thaliana (Mouse-ear cress), this protein is DNA-directed RNA polymerases II, IV and V subunit 9A (NRPB9A).